The sequence spans 260 residues: Carbonic anhydrase 2 (260 aa).

Serine 2 is modified (N-acetylserine). Serine 2 is modified (phosphoserine). An Alpha-carbonic anhydrase domain is found at 3-259 (HHWGYGKHNG…LKGRQVKASF (257 aa)). Histidine 64 serves as the catalytic Proton donor/acceptor. Histidine 94, histidine 96, and histidine 119 together coordinate Zn(2+). Phosphoserine occurs at positions 165 and 172. 198–199 (TT) is a binding site for substrate.

It belongs to the alpha-carbonic anhydrase family. Interacts with SLC4A4 and SLC26A6. Interaction with SLC4A7 regulates SLC4A7 transporter activity. It depends on Zn(2+) as a cofactor.

The protein resides in the cytoplasm. It is found in the cell membrane. The catalysed reaction is hydrogencarbonate + H(+) = CO2 + H2O. The enzyme catalyses urea = cyanamide + H2O. Inhibited by acetazolamide. Catalyzes the reversible hydration of carbon dioxide. Can also hydrate cyanamide to urea. Involved in the regulation of fluid secretion into the anterior chamber of the eye. Essential for bone resorption and osteoclast differentiation. Contributes to intracellular pH regulation in the duodenal upper villous epithelium during proton-coupled peptide absorption. Stimulates the chloride-bicarbonate exchange activity of SLC26A6. In Oryctolagus cuniculus (Rabbit), this protein is Carbonic anhydrase 2 (CA2).